Here is a 420-residue protein sequence, read N- to C-terminus: Protein disulfide isomerase CRELD1 (420 aa).

An N-terminal signal peptide occupies residues methionine 1–leucine 29. Residues glutamine 30–glutamate 362 are Extracellular-facing. The short motif at cysteine 46–cysteine 49 is the CXXC element. A disulfide bridge connects residues cysteine 46 and cysteine 49. A glycan (N-linked (GlcNAc...) asparagine) is linked at asparagine 79. The EGF-like 1 domain occupies leucine 153–glycine 193. 3 cysteine pairs are disulfide-bonded: cysteine 155-cysteine 169, cysteine 163-cysteine 181, and cysteine 183-cysteine 192. Asparagine 205 carries N-linked (GlcNAc...) asparagine glycosylation. FU repeat units follow at residues histidine 208–cysteine 256 and serine 268–proline 315. The short motif at cysteine 278–cysteine 281 is the CXXC element. 4 disulfide bridges follow: cysteine 278–cysteine 281, cysteine 309–cysteine 321, cysteine 314–cysteine 330, and cysteine 332–cysteine 343. An EGF-like 2; calcium-binding domain is found at aspartate 305–valine 344. Residues leucine 363–alanine 383 form a helical membrane-spanning segment. A topological domain (cytoplasmic) is located at residue lysine 384. The chain crosses the membrane as a helical span at residues glycine 385–leucine 405. At serine 406–arginine 420 the chain is on the extracellular side.

The protein belongs to the CRELD family. As to expression, highly expressed in fetal lung, liver, kidney, adult heart, brain and skeletal muscle. Weakly expressed in placenta, fetal brain, and adult lung, liver, kidney and pancreas.

The protein resides in the membrane. It carries out the reaction Catalyzes the rearrangement of -S-S- bonds in proteins.. Functionally, protein disulfide isomerase. Promotes the localization of acetylcholine receptors (AChRs) to the plasma membrane. The polypeptide is Protein disulfide isomerase CRELD1 (CRELD1) (Homo sapiens (Human)).